The chain runs to 174 residues: Ribosome maturation factor RimM (174 aa).

In terms of domain architecture, PRC barrel spans 98–171 (EGEFYFHEII…KIEIELMEGL (74 aa)).

It belongs to the RimM family. Binds ribosomal protein uS19.

It localises to the cytoplasm. An accessory protein needed during the final step in the assembly of 30S ribosomal subunit, possibly for assembly of the head region. Essential for efficient processing of 16S rRNA. May be needed both before and after RbfA during the maturation of 16S rRNA. It has affinity for free ribosomal 30S subunits but not for 70S ribosomes. The polypeptide is Ribosome maturation factor RimM (Bacillus subtilis (strain 168)).